Consider the following 740-residue polypeptide: Platelet endothelial cell adhesion molecule (740 aa).

The signal sequence occupies residues M1–G27. At Q28–K602 the chain is on the extracellular side. 3 consecutive Ig-like C2-type domains span residues N35 to V126, G145 to R223, and P236 to S315. N-linked (GlcNAc...) asparagine glycosylation is found at N52 and N84. 3 disulfides stabilise this stretch: C57–C109, C152–C206, and C256–C304. Residues N284, N301, N320, N357, N372, N436, N456, and N552 are each glycosylated (N-linked (GlcNAc...) asparagine). Ig-like C2-type domains are found at residues P328–A404, G425–R494, and P500–A592. 3 cysteine pairs are disulfide-bonded: C347/C387, C432/C477, and C524/C573. A helical transmembrane segment spans residues G603–A621. The Cytoplasmic portion of the chain corresponds to R622–T740. 2 short sequence motifs (ITIM motif) span residues V690–V695 and T713–I718. Y692 and Y715 each carry phosphotyrosine; by FER. Positions V697–T740 are disordered. The segment at T711–S731 is membrane-bound segment which detaches upon phosphorylation. Residues E717–R732 are compositionally biased toward basic and acidic residues. A may play a role in cytoprotective signaling region spans residues P723–T740. Phosphoserine occurs at positions 731 and 736.

As to quaternary structure, trans-homodimer (via Ig-like C2-type 1 and Ig-like C2-type 2 domains); trans-homodimerization is required for cell-cell interaction. Forms a complex with BDKRB2 and GNAQ. Interacts with BDKRB2 and GNAQ. Interacts with PTPN11; Tyr-715 is critical for PTPN11 recruitment. Interacts with FER. Interacts with CD177; the interaction is Ca(2+)-dependent; the interaction is direct. Post-translationally, phosphorylated on Ser and Tyr residues by src kinases after cellular activation. Upon activation, phosphorylated on Ser-731 which probably initiates the dissociation of the membrane-interaction segment (residues 711-731) from the cell membrane allowing the sequential phosphorylation of Tyr-715 and Tyr-692. Constitutively phosphorylated on Ser-736 in resting platelets. Phosphorylated on tyrosine residues by FER and FES in response to FCER1 activation. In endothelial cells Fyn mediates mechanical-force (stretch or pull) induced tyrosine phosphorylation. Palmitoylation by ZDHHC21 is necessary for cell surface expression in endothelial cells and enrichment in membrane rafts.

The protein resides in the cell membrane. Its subcellular location is the membrane raft. It is found in the cell junction. Its function is as follows. Cell adhesion molecule which is required for leukocyte transendothelial migration (TEM) under most inflammatory conditions. Tyr-692 plays a critical role in TEM and is required for efficient trafficking of PECAM1 to and from the lateral border recycling compartment (LBRC) and is also essential for the LBRC membrane to be targeted around migrating leukocytes. Trans-homophilic interaction may play a role in endothelial cell-cell adhesion via cell junctions. Heterophilic interaction with CD177 plays a role in transendothelial migration of neutrophils. Homophilic ligation of PECAM1 prevents macrophage-mediated phagocytosis of neighboring viable leukocytes by transmitting a detachment signal. Promotes macrophage-mediated phagocytosis of apoptotic leukocytes by tethering them to the phagocytic cells; PECAM1-mediated detachment signal appears to be disabled in apoptotic leukocytes. Modulates bradykinin receptor BDKRB2 activation. Regulates bradykinin- and hyperosmotic shock-induced ERK1/2 activation in endothelial cells. Induces susceptibility to atherosclerosis. In Sus scrofa (Pig), this protein is Platelet endothelial cell adhesion molecule (PECAM1).